We begin with the raw amino-acid sequence, 666 residues long: Endogenous retrovirus group K member 7 Gag polyprotein (666 aa).

Residue glycine 2 is the site of N-myristoyl glycine attachment. 2 disordered regions span residues 165–205 (GKGP…NKTQ) and 217–264 (ELQY…GSEL). Positions 232–247 (GMPPAPQGRAPYPQPP) are enriched in pro residues. 2 consecutive CCHC-type zinc fingers follow at residues 544 to 561 (GKCYNCGQIGHLKKNCPV) and 580 to 597 (DLCPRCKKGKHWASQCRS). The tract at residues 598-641 (KFDKNGQPLSGNEQRGQPQAPQQTGAFPIQPFVPQGFQEQQPPL) is disordered. Over residues 604–622 (QPLSGNEQRGQPQAPQQTG) the composition is skewed to polar residues.

It belongs to the beta type-B retroviral Gag protein family. HERV class-II K(HML-2) gag subfamily. Post-translationally, specific enzymatic cleavages may yield mature proteins. Myristoylation is essential for retroviral assembly. Alteration of the glycine residue leads to a block in the budding of particles and an accumulation of Gag inside the cell.

The protein resides in the cell membrane. In terms of biological role, the products of the Gag polyproteins of infectious retroviruses perform highly complex orchestrated tasks during the assembly, budding, maturation, and infection stages of the viral replication cycle. During viral assembly, the proteins form membrane associations and self-associations that ultimately result in budding of an immature virion from the infected cell. Gag precursors also function during viral assembly to selectively bind and package two plus strands of genomic RNA. Endogenous Gag proteins may have kept, lost or modified their original function during evolution. The sequence is that of Endogenous retrovirus group K member 7 Gag polyprotein (ERVK-7) from Homo sapiens (Human).